The primary structure comprises 444 residues: tRNA-2-methylthio-N(6)-dimethylallyladenosine synthase (444 aa).

The region spanning 4–120 is the MTTase N-terminal domain; the sequence is PTYYTITFGC…LGDLLAQVEA (117 aa). The [4Fe-4S] cluster site is built by cysteine 13, cysteine 49, cysteine 83, cysteine 155, cysteine 159, and cysteine 162. One can recognise a Radical SAM core domain in the interval 141–372; the sequence is RDSQVTAWIN…RLVAEVAAAR (232 aa). Positions 374–438 constitute a TRAM domain; it reads ARLLGQVQEV…AFSLTGEAVT (65 aa).

Belongs to the methylthiotransferase family. MiaB subfamily. As to quaternary structure, monomer. [4Fe-4S] cluster serves as cofactor.

It is found in the cytoplasm. The catalysed reaction is N(6)-dimethylallyladenosine(37) in tRNA + (sulfur carrier)-SH + AH2 + 2 S-adenosyl-L-methionine = 2-methylsulfanyl-N(6)-dimethylallyladenosine(37) in tRNA + (sulfur carrier)-H + 5'-deoxyadenosine + L-methionine + A + S-adenosyl-L-homocysteine + 2 H(+). Functionally, catalyzes the methylthiolation of N6-(dimethylallyl)adenosine (i(6)A), leading to the formation of 2-methylthio-N6-(dimethylallyl)adenosine (ms(2)i(6)A) at position 37 in tRNAs that read codons beginning with uridine. The polypeptide is tRNA-2-methylthio-N(6)-dimethylallyladenosine synthase (Synechococcus sp. (strain JA-2-3B'a(2-13)) (Cyanobacteria bacterium Yellowstone B-Prime)).